The primary structure comprises 231 residues: Uracil-DNA glycosylase (231 aa).

D74 serves as the catalytic Proton acceptor.

It belongs to the uracil-DNA glycosylase (UDG) superfamily. UNG family.

It is found in the cytoplasm. It catalyses the reaction Hydrolyzes single-stranded DNA or mismatched double-stranded DNA and polynucleotides, releasing free uracil.. Excises uracil residues from the DNA which can arise as a result of misincorporation of dUMP residues by DNA polymerase or due to deamination of cytosine. The protein is Uracil-DNA glycosylase of Campylobacter jejuni subsp. jejuni serotype O:2 (strain ATCC 700819 / NCTC 11168).